Consider the following 208-residue polypeptide: Thymidylate kinase (208 aa).

10 to 17 (GIDGSGKS) provides a ligand contact to ATP.

The protein belongs to the thymidylate kinase family.

It catalyses the reaction dTMP + ATP = dTDP + ADP. In terms of biological role, phosphorylation of dTMP to form dTDP in both de novo and salvage pathways of dTTP synthesis. The sequence is that of Thymidylate kinase from Jannaschia sp. (strain CCS1).